We begin with the raw amino-acid sequence, 228 residues long: uncharacterized protein (228 aa).

A signal peptide spans 1–16 (MILLLLALISATTAFQ). A helical transmembrane segment spans residues 206 to 225 (LFQTLFFVTLSFLVGSAFAL).

The protein to A.fulgidus AF_1225.

Its subcellular location is the membrane. This is an uncharacterized protein from Archaeoglobus fulgidus (strain ATCC 49558 / DSM 4304 / JCM 9628 / NBRC 100126 / VC-16).